The primary structure comprises 532 residues: Germ cell nuclear acidic-1 protein (532 aa).

A compositionally biased stretch (basic and acidic residues) spans 1–10; the sequence is MPTPFRDLHN. Disordered regions lie at residues 1–50, 84–181, and 213–253; these read MPTP…EPIS, REAP…GNFE, and YISE…DRKQ. The span at 14-32 shows a compositional bias: low complexity; that stretch reads ASASSYETAWSSSFSSRRS. Composition is skewed to basic and acidic residues over residues 39 to 48, 94 to 107, and 124 to 133; these read SNLKEIKDEP, LLQK…RDML, and KPKEVKKALK. A compositionally biased stretch (acidic residues) spans 213–235; that stretch reads YISEESSEEESEEEEEDVDDEEY. Positions 236–251 are enriched in basic and acidic residues; sequence RESSPEVEAKISYSDR. The region spanning 308–398 is the SprT-like domain; the sequence is RRIFSAIPSE…GARCSSVFKS (91 aa). The segment at 468-489 is disordered; the sequence is AKPVGPILSNSSKPSPPAPRRI.

This sequence belongs to the serine-aspartate repeat-containing protein (SDr) family. Interacts with top-2; this interaction allows the resolution of topoisomerase II (top-2) DNA-protein cross-links. As to expression, mainly expressed in germ cells and early embryonic, proliferating cells.

The protein localises to the chromosome. Functionally, may play a role in DNA-protein cross-links (DPCs) clearance through a SUMO-dependent recruitment to sites of DPCs, ensuring the genomic stability by protecting germ cells and early embryos from various sources of damage. May resolve the topoisomerase II (top-2) DPCs. Limits replication stress and DNA double-strand breaks. In Caenorhabditis elegans, this protein is Germ cell nuclear acidic-1 protein.